The primary structure comprises 154 residues: uncharacterized protein (154 aa).

A run of 4 helical transmembrane segments spans residues 15–37 (DFSFIINSYATNAIFLAAYALIT), 58–80 (FAAMLAGGLVSWGIVSMPYWLWG), 95–116 (LGALDAIVGGIILGYSASFAFT), and 123–145 (LVISWMLANSISTLVVAIFFVPH).

Its subcellular location is the cell membrane. This is an uncharacterized protein from Archaeoglobus fulgidus (strain ATCC 49558 / DSM 4304 / JCM 9628 / NBRC 100126 / VC-16).